The primary structure comprises 1081 residues: Dyslexia-associated protein KIAA0319 homolog (1081 aa).

Residues Met-1 to Ser-22 form the signal peptide. An MANSC domain is found at Gln-23 to Tyr-99. Over Gln-23–Ser-964 the chain is Extracellular. The tract at residues Leu-168 to Trp-331 is disordered. An N-linked (GlcNAc...) asparagine glycan is attached at Asn-196. Polar residues-rich tracts occupy residues Ala-197–Ala-206 and Glu-222–Pro-234. Residue Asn-228 is glycosylated (N-linked (GlcNAc...) asparagine). Over residues Pro-236–Glu-255 the composition is skewed to low complexity. N-linked (GlcNAc...) asparagine glycosylation is found at Asn-272 and Asn-302. Polar residues-rich tracts occupy residues His-283–Pro-307 and Thr-314–Thr-324. 5 consecutive PKD domains span residues Ala-345–Ala-436, Val-444–Ala-533, Val-539–Glu-629, Asn-630–Glu-723, and Arg-729–Asp-820. Asn-430, Asn-507, Asn-522, Asn-545, and Asn-560 each carry an N-linked (GlcNAc...) asparagine glycan. N-linked (GlcNAc...) asparagine glycosylation is present at Asn-742. The helical transmembrane segment at Val-965–Leu-985 threads the bilayer. The Cytoplasmic portion of the chain corresponds to Cys-986 to Arg-1081. The Endocytosis signal motif lies at Tyr-1004–Leu-1007. Position 1009 is a phosphoserine (Ser-1009).

Homodimer. Interacts with AP2M1; required for clathrin-mediated endocytosis. Post-translationally, N-glycosylated. In terms of processing, O-glycosylated. Shedding of the extracellular domain and intramembrane cleavage produce several proteolytic products. The intramembrane cleavage releases a soluble cytoplasmic polypeptide that translocates to the nucleolus.

The protein localises to the cell membrane. Its subcellular location is the early endosome membrane. In terms of biological role, involved in neuronal migration during development of the cerebral neocortex. May function in a cell autonomous and a non-cell autonomous manner and play a role in appropriate adhesion between migrating neurons and radial glial fibers. May also regulate growth and differentiation of dendrites. The protein is Dyslexia-associated protein KIAA0319 homolog (Kiaa0319) of Mus musculus (Mouse).